Here is a 110-residue protein sequence, read N- to C-terminus: MSLTEARFHELIDDLQQNVEDVFEDSDLDVDLENSAGVLSVRFENGSQLILSRQEPLRQLWLAARSGGFHFDYDEAGGRWICDASGDSLGELLARVTLEQIGEELEFPEL.

Belongs to the frataxin family.

Involved in iron-sulfur (Fe-S) cluster assembly. May act as a regulator of Fe-S biogenesis. The sequence is that of Iron-sulfur cluster assembly protein CyaY from Azotobacter vinelandii (strain DJ / ATCC BAA-1303).